The sequence spans 353 residues: UPF0283 membrane protein YPA_1696 (353 aa).

The next 3 helical transmembrane spans lie at 71–91 (MVTAGMVILGASVIAQSVQWV), 101–121 (IALGATTAGGLIILAGVGSVV), and 214–234 (ESALMIAVSPLALVDMAFIAW).

Belongs to the UPF0283 family.

It localises to the cell inner membrane. This Yersinia pestis bv. Antiqua (strain Antiqua) protein is UPF0283 membrane protein YPA_1696.